The sequence spans 192 residues: Density-regulated protein homolog (192 aa).

The segment at 62 to 116 (GLEISDEPAADGDEKKKQKRGGKGSKTGAAAAQAAASGGKKKGGGPQKVTLQREP) is disordered. The segment covering 87-99 (KTGAAAAQAAASG) has biased composition (low complexity). The 60-residue stretch at 117–176 (RGKKSVTVIKGLATFDIDLKVASKLFAQKFACGSSVTGADEIVIQGDVKDDLLDLIPEKW) folds into the SUI1 domain.

This sequence belongs to the DENR family.

The sequence is that of Density-regulated protein homolog from Caenorhabditis elegans.